Reading from the N-terminus, the 879-residue chain is Bifunctional uridylyltransferase/uridylyl-removing enzyme (879 aa).

The interval 1-340 (MANVQEDKDF…GTQDLQHAEH (340 aa)) is uridylyltransferase. Residues 341-700 (ISDDFAVANK…IGDENNYGTT (360 aa)) form a uridylyl-removing region. Residues 458-580 (VDEHTFRLVR…VSTPERLDYL (123 aa)) form the HD domain. 2 ACT domains span residues 701-782 (ELFI…STKR) and 809-879 (TFEL…DLEF).

It belongs to the GlnD family. Requires Mg(2+) as cofactor.

It catalyses the reaction [protein-PII]-L-tyrosine + UTP = [protein-PII]-uridylyl-L-tyrosine + diphosphate. It carries out the reaction [protein-PII]-uridylyl-L-tyrosine + H2O = [protein-PII]-L-tyrosine + UMP + H(+). Its activity is regulated as follows. Uridylyltransferase (UTase) activity is inhibited by glutamine, while glutamine activates uridylyl-removing (UR) activity. Its function is as follows. Modifies, by uridylylation and deuridylylation, the PII regulatory proteins (GlnB and homologs), in response to the nitrogen status of the cell that GlnD senses through the glutamine level. Under low glutamine levels, catalyzes the conversion of the PII proteins and UTP to PII-UMP and PPi, while under higher glutamine levels, GlnD hydrolyzes PII-UMP to PII and UMP (deuridylylation). Thus, controls uridylylation state and activity of the PII proteins, and plays an important role in the regulation of nitrogen assimilation and metabolism. The chain is Bifunctional uridylyltransferase/uridylyl-removing enzyme from Idiomarina loihiensis (strain ATCC BAA-735 / DSM 15497 / L2-TR).